Reading from the N-terminus, the 397-residue chain is Enoyl-[acyl-carrier-protein] reductase [NADH] (397 aa).

Residues 48–53 (GASTGY), 74–75 (FE), 111–112 (DA), and 139–140 (LA) contribute to the NAD(+) site. A substrate-binding site is contributed by Y225. Y235 functions as the Proton donor in the catalytic mechanism. NAD(+) is bound by residues K244 and 273–275 (VVT).

This sequence belongs to the TER reductase family. Monomer.

The enzyme catalyses a 2,3-saturated acyl-[ACP] + NAD(+) = a (2E)-enoyl-[ACP] + NADH + H(+). The protein operates within lipid metabolism; fatty acid biosynthesis. In terms of biological role, involved in the final reduction of the elongation cycle of fatty acid synthesis (FAS II). Catalyzes the reduction of a carbon-carbon double bond in an enoyl moiety that is covalently linked to an acyl carrier protein (ACP). In Edwardsiella ictaluri (strain 93-146), this protein is Enoyl-[acyl-carrier-protein] reductase [NADH].